Here is an 81-residue protein sequence, read N- to C-terminus: Large ribosomal subunit protein bL27 (81 aa).

The segment covering 1–11 has biased composition (polar residues); sequence MATSKSGGSSK. Residues 1 to 20 are disordered; sequence MATSKSGGSSKNGRDSISKR.

The protein belongs to the bacterial ribosomal protein bL27 family.

The chain is Large ribosomal subunit protein bL27 from Borreliella afzelii (strain PKo) (Borrelia afzelii).